We begin with the raw amino-acid sequence, 257 residues long: Snake venom serine protease Dav-KN (257 aa).

A signal peptide spans 1 to 18 (MVLIRVLANLLILQLSYA). Residues 19–24 (QKSSEL) constitute a propeptide that is removed on maturation. Positions 25-248 (VIGGDECNIN…HLDWIKGIIA (224 aa)) constitute a Peptidase S1 domain. 5 cysteine pairs are disulfide-bonded: Cys-31/Cys-162, Cys-49/Cys-65, Cys-97/Cys-255, Cys-173/Cys-188, and Cys-199/Cys-224. Residues His-64 and Asp-109 each act as charge relay system in the active site. The Charge relay system role is filled by Ser-203.

It belongs to the peptidase S1 family. Snake venom subfamily. As to quaternary structure, monomer. Expressed by the venom gland.

The protein resides in the secreted. Its function is as follows. Snake venom serine protease that may act in the hemostasis system of the prey. The sequence is that of Snake venom serine protease Dav-KN from Deinagkistrodon acutus (Hundred-pace snake).